We begin with the raw amino-acid sequence, 146 residues long: 3-hydroxyacyl-[acyl-carrier-protein] dehydratase FabZ (146 aa).

The active site involves His-48.

Belongs to the thioester dehydratase family. FabZ subfamily.

Its subcellular location is the cytoplasm. It catalyses the reaction a (3R)-hydroxyacyl-[ACP] = a (2E)-enoyl-[ACP] + H2O. Its function is as follows. Involved in unsaturated fatty acids biosynthesis. Catalyzes the dehydration of short chain beta-hydroxyacyl-ACPs and long chain saturated and unsaturated beta-hydroxyacyl-ACPs. This Campylobacter jejuni subsp. jejuni serotype O:6 (strain 81116 / NCTC 11828) protein is 3-hydroxyacyl-[acyl-carrier-protein] dehydratase FabZ.